The sequence spans 290 residues: HTH-type transcriptional activator RhaR (290 aa).

The HTH araC/xylS-type domain maps to 179–277 (DLIMSALQQS…GMTPRDYRQR (99 aa)). 2 consecutive DNA-binding regions (H-T-H motif) follow at residues 196-217 (ADFC…RQQT) and 244-267 (ISDI…TREA).

Binds DNA as a dimer.

It localises to the cytoplasm. Its function is as follows. Activates expression of the rhaSR operon in response to L-rhamnose. In Yersinia pestis bv. Antiqua (strain Antiqua), this protein is HTH-type transcriptional activator RhaR.